Here is a 545-residue protein sequence, read N- to C-terminus: Chaperonin GroEL 3 (545 aa).

ATP contacts are provided by residues 29 to 32 (TLGP), 86 to 90 (DGTTT), glycine 413, 479 to 481 (DAV), and aspartate 495. The disordered stretch occupies residues 526–545 (DKQAKAPAGVGPGPGEGFDY). The segment covering 535 to 545 (VGPGPGEGFDY) has biased composition (gly residues).

Belongs to the chaperonin (HSP60) family. As to quaternary structure, forms a cylinder of 14 subunits composed of two heptameric rings stacked back-to-back. Interacts with the co-chaperonin GroES.

Its subcellular location is the cytoplasm. The enzyme catalyses ATP + H2O + a folded polypeptide = ADP + phosphate + an unfolded polypeptide.. In terms of biological role, together with its co-chaperonin GroES, plays an essential role in assisting protein folding. The GroEL-GroES system forms a nano-cage that allows encapsulation of the non-native substrate proteins and provides a physical environment optimized to promote and accelerate protein folding. This is Chaperonin GroEL 3 from Trichormus variabilis (strain ATCC 29413 / PCC 7937) (Anabaena variabilis).